The following is a 38-amino-acid chain: MKRKPMSRKASQKTFKKNTGVQRMNHLNPRAMRGGIRL.

A compositionally biased stretch (basic residues) spans 1–16 (MKRKPMSRKASQKTFK). Positions 1 to 38 (MKRKPMSRKASQKTFKKNTGVQRMNHLNPRAMRGGIRL) are disordered.

The protein belongs to the microviridae J protein family.

It is found in the virion. The protein resides in the host cytoplasm. In terms of biological role, mediates ssDNA packaging into virion, it locates to the internal surface of the capsid, thereby displacing the internal scaffolding protein VP3 during virion formation. Additionally, protein VP8 plays a role in viral attachment to the host cell. This Bdellovibrio phage phiMH2K (Bacteriophage phiMH2K) protein is DNA binding protein VP8.